Here is a 395-residue protein sequence, read N- to C-terminus: Enoyl-[acyl-carrier-protein] reductase [NADH] (395 aa).

NAD(+)-binding positions include 48 to 53, 74 to 75, 111 to 112, and 139 to 140; these read GASTGY, FE, DA, and LA. Y225 contacts substrate. Y235 (proton donor) is an active-site residue. NAD(+)-binding positions include K244 and 273-275; that span reads LVT.

Belongs to the TER reductase family. Monomer.

It catalyses the reaction a 2,3-saturated acyl-[ACP] + NAD(+) = a (2E)-enoyl-[ACP] + NADH + H(+). It participates in lipid metabolism; fatty acid biosynthesis. Involved in the final reduction of the elongation cycle of fatty acid synthesis (FAS II). Catalyzes the reduction of a carbon-carbon double bond in an enoyl moiety that is covalently linked to an acyl carrier protein (ACP). This Saccharophagus degradans (strain 2-40 / ATCC 43961 / DSM 17024) protein is Enoyl-[acyl-carrier-protein] reductase [NADH].